Reading from the N-terminus, the 192-residue chain is uncharacterized protein (192 aa).

2 helical membrane passes run 31 to 51 and 119 to 139; these read IVET…YVYE and VPGA…LWEI.

Its subcellular location is the cell membrane. This is an uncharacterized protein from Thermotoga maritima (strain ATCC 43589 / DSM 3109 / JCM 10099 / NBRC 100826 / MSB8).